The chain runs to 81 residues: MLIKVKTLTGKEIEIDIEPTDKVERIKERVEEKEGIPPQQQRLIYSGKQMNDEKTAADYKILGGSVLHLVLALRGGGGLGQ.

Lysine 48 carries the post-translational modification N6-acetyllysine. The tract at residues 70-72 (VLA) is interaction with UBE1C. Glycine 76 participates in a covalent cross-link: Glycyl lysine isopeptide (Gly-Lys) (interchain with K-? in acceptor proteins). Positions 77–81 (GGLGQ) are excised as a propeptide.

This sequence belongs to the ubiquitin family. As to quaternary structure, interacts with AHR; interaction is direct. Interacts with NUB1; interaction is direct. Interacts with ESR1. Post-translationally, cleavage of precursor form by UCHL3 or SENP8 is necessary for function. As to expression, expressed in the CA1 region of the hippocampus (at protein level).

It localises to the nucleus. In terms of biological role, ubiquitin-like protein which plays an important role in cell cycle control and embryogenesis via its conjugation to a limited number of cellular proteins, such as cullins or p53/TP53. Attachment of NEDD8 to cullins is critical for the recruitment of E2 to the cullin-RING-based E3 ubiquitin-protein ligase complex, thus facilitating polyubiquitination and proteasomal degradation of cyclins and other regulatory proteins. Attachment of NEDD8 to p53/TP53 inhibits p53/TP53 transcriptional activity. Covalent attachment to its substrates requires prior activation by the E1 complex UBE1C-APPBP1 and linkage to the E2 enzyme UBE2M. This chain is Ubiquitin-like protein NEDD8 (Nedd8), found in Rattus norvegicus (Rat).